The chain runs to 564 residues: Periplasmic [NiFe] hydrogenase large subunit (564 aa).

Ni(2+)-binding residues include cysteine 72, cysteine 75, cysteine 543, and cysteine 546. Positions 550–564 are excised as a propeptide; that stretch reads VIEPETNEILKFKVC.

It belongs to the [NiFe]/[NiFeSe] hydrogenase large subunit family. As to quaternary structure, heterodimer of a large and a small subunit. The cofactor is Ni(2+).

It is found in the periplasm. The catalysed reaction is 2 Fe(III)-[cytochrome c3] + H2 = 2 Fe(II)-[cytochrome c3] + 2 H(+). The chain is Periplasmic [NiFe] hydrogenase large subunit (hydB) from Solidesulfovibrio fructosivorans (Desulfovibrio fructosivorans).